We begin with the raw amino-acid sequence, 274 residues long: 2,3,4,5-tetrahydropyridine-2,6-dicarboxylate N-succinyltransferase (274 aa).

The substrate site is built by R106 and D143.

This sequence belongs to the transferase hexapeptide repeat family. Homotrimer.

Its subcellular location is the cytoplasm. The enzyme catalyses (S)-2,3,4,5-tetrahydrodipicolinate + succinyl-CoA + H2O = (S)-2-succinylamino-6-oxoheptanedioate + CoA. It participates in amino-acid biosynthesis; L-lysine biosynthesis via DAP pathway; LL-2,6-diaminopimelate from (S)-tetrahydrodipicolinate (succinylase route): step 1/3. This Rickettsia typhi (strain ATCC VR-144 / Wilmington) protein is 2,3,4,5-tetrahydropyridine-2,6-dicarboxylate N-succinyltransferase.